Here is a 301-residue protein sequence, read N- to C-terminus: GTP cyclohydrolase FolE2 (301 aa).

This sequence belongs to the GTP cyclohydrolase IV family.

The enzyme catalyses GTP + H2O = 7,8-dihydroneopterin 3'-triphosphate + formate + H(+). It participates in cofactor biosynthesis; 7,8-dihydroneopterin triphosphate biosynthesis; 7,8-dihydroneopterin triphosphate from GTP: step 1/1. In terms of biological role, converts GTP to 7,8-dihydroneopterin triphosphate. The sequence is that of GTP cyclohydrolase FolE2 from Pseudomonas savastanoi pv. phaseolicola (strain 1448A / Race 6) (Pseudomonas syringae pv. phaseolicola (strain 1448A / Race 6)).